The sequence spans 159 residues: Small ribosomal subunit protein bS6 (159 aa).

Residues U46 and U52 are each a non-standard amino acid (selenocysteine).

It belongs to the bacterial ribosomal protein bS6 family.

Functionally, binds together with bS18 to 16S ribosomal RNA. The protein is Small ribosomal subunit protein bS6 of Desulfotalea psychrophila (strain LSv54 / DSM 12343).